Consider the following 505-residue polypeptide: Exoglucanase 1 (505 aa).

The first 17 residues, 1 to 17 (MYRKLAVISAFLAAARA), serve as a signal peptide directing secretion. The residue at position 18 (Gln-18) is a Pyrrolidone carboxylic acid. Positions 18 to 449 (QQVCTQQAET…GSTGGNTGSN (432 aa)) are catalytic. Cystine bridges form between Cys-21–Cys-88, Cys-36–Cys-41, Cys-66–Cys-87, and Cys-77–Cys-83. Residues Asn-93 and Asn-126 are each glycosylated (N-linked (GlcNAc...) asparagine). 6 cysteine pairs are disulfide-bonded: Cys-151–Cys-410, Cys-185–Cys-223, Cys-189–Cys-222, Cys-243–Cys-269, Cys-251–Cys-256, and Cys-274–Cys-344. Residue Glu-225 is the Nucleophile of the active site. Glu-230 (proton donor/acceptor) is an active-site residue. Residues Asn-283 and Asn-397 are each glycosylated (N-linked (GlcNAc...) asparagine). Disordered regions lie at residues 399–423 (TAST…VEAQ) and 440–472 (GSTG…ATQT). The span at 409–423 (SCSTSSGVPAQVEAQ) shows a compositional bias: polar residues. Residues 447–470 (GSNPPGTSTTRAPPSSTGSSPTAT) show a composition bias toward low complexity. The tract at residues 450–468 (PPGTSTTRAPPSSTGSSPT) is linker. In terms of domain architecture, CBM1 spans 469–505 (ATQTHYGQCGGTGWTGPTRCASGYTCQVLNPFYSQCL).

The protein belongs to the glycosyl hydrolase 7 (cellulase C) family. In terms of processing, O-glycosylated. O-glycosylation of the cellulase linker provides protection from proteolysis. Linker glycans also contribute to binding affinity of cellobiohydrolases to cellulose.

Its subcellular location is the secreted. It carries out the reaction Hydrolysis of (1-&gt;4)-beta-D-glucosidic linkages in cellulose and cellotetraose, releasing cellobiose from the non-reducing ends of the chains.. Functionally, exocellobiohydrolases (CBH) that catalyzes the hydrolysis of 1,4-beta-D-glucosidic bonds in cellulose to release the disaccharide cellobiose. The degradation of cellulose involves an interplay between different cellulolytic enzymes. Hydrolysis starts with endoglucanases (EGs), which cut internal beta-1,4-glucosidic bonds in cellulose to reduce the polymerization degree of the substrate and create new chain ends for exocellobiohydrolases (CBHs). The CBHs release the disaccharide cellobiose from the non-reducing end of the cellulose polymer chain. Finally, beta-1,4-glucosidases hydrolyze the cellobiose and other short cello-oligosaccharides into glucose units. This Trichoderma harzianum (Hypocrea lixii) protein is Exoglucanase 1 (cbh1).